The chain runs to 327 residues: Putative gluconeogenesis factor (327 aa).

The protein belongs to the gluconeogenesis factor family.

It is found in the cytoplasm. Required for morphogenesis under gluconeogenic growth conditions. In Lactococcus lactis subsp. lactis (strain IL1403) (Streptococcus lactis), this protein is Putative gluconeogenesis factor (yjiF).